We begin with the raw amino-acid sequence, 585 residues long: MAGUK p55 subfamily member 3 (585 aa).

L27 domains are found at residues 6–60 (EDSG…ERQS) and 61–118 (PTPV…FDPV). Residues 137–212 (IVRLVKNKEP…LAQSQGSITL (76 aa)) form the PDZ domain. Residues 226–296 (ESKVFMRALF…PSKGFQERRL (71 aa)) form the SH3 domain. Phosphoserine is present on S307. The Guanylate kinase-like domain maps to 385-570 (PRLVVLIGSL…AYSQLKVVLE (186 aa)).

The protein belongs to the MAGUK family. Interacts with HTR2C; this interaction stabilizes the receptor at the plasma membrane and prevents the desensitization of the HTR2C receptor-mediated calcium response. Interacts with HTR2A. Interacts with HTR4. Interacts (via PDZ domain) with CADM1 (via C-terminus)Interacts (via PDZ domain) with CADM1; this interaction connects CADM1 with DLG1. Interacts (via Guanylate kinase-like domain) with PALS1. Interacts with DLG1 (via N-terminus); this interaction connects CADM1 with DLG1 and links CADM1 with the regulatory subunit of phosphoinositide-3-kinase (PI3K) by forming a multiprotein complex and participates in cell spreading. As to expression, expressed in retina (at protein level) at the subapical region (SAR) adjacent to adherens junctions at the OLM, and at the OPL.

The protein resides in the cell membrane. The protein localises to the apical cell membrane. It localises to the cell junction. It is found in the adherens junction. Its function is as follows. Participates in cell spreading through the phosphoinositide-3-kinase (PI3K) pathway by connecting CADM1 to DLG1 and the regulatory subunit of phosphoinositide-3-kinase (PI3K). Stabilizes HTR2C at the plasma membrane and prevents its desensitization. May participates in the maintenance of adherens junctions. The sequence is that of MAGUK p55 subfamily member 3 from Homo sapiens (Human).